Reading from the N-terminus, the 104-residue chain is Large ribosomal subunit protein uL24 (104 aa).

Belongs to the universal ribosomal protein uL24 family. Part of the 50S ribosomal subunit.

In terms of biological role, one of two assembly initiator proteins, it binds directly to the 5'-end of the 23S rRNA, where it nucleates assembly of the 50S subunit. One of the proteins that surrounds the polypeptide exit tunnel on the outside of the subunit. The sequence is that of Large ribosomal subunit protein uL24 from Pseudoalteromonas atlantica (strain T6c / ATCC BAA-1087).